Consider the following 450-residue polypeptide: Cysteine proteinase (450 aa).

A signal peptide spans 1 to 20 (MPRTEMVRFVRLPVVLLAMA). The propeptide at 21-125 (ACLASVALGS…RKTVNVTTGR (105 aa)) is activation peptide. N-linked (GlcNAc...) asparagine glycosylation occurs at asparagine 120. Residues cysteine 147 and cysteine 188 are joined by a disulfide bond. Active-site residues include cysteine 150, histidine 287, and asparagine 307. Positions 343 to 450 (TPPPPPPPPP…TKAARLVPHQ (108 aa)) are 108-residue extension. The N-linked (GlcNAc...) asparagine glycan is linked to asparagine 397.

This sequence belongs to the peptidase C1 family.

The protein localises to the lysosome. In terms of biological role, the cysteine proteinases have a potential role in host-parasite interaction and virulence. The sequence is that of Cysteine proteinase from Trypanosoma brucei brucei.